A 307-amino-acid polypeptide reads, in one-letter code: Pyridoxal 5'-phosphate synthase subunit PdxS (307 aa).

Asp-37 lines the D-ribose 5-phosphate pocket. Catalysis depends on Lys-94, which acts as the Schiff-base intermediate with D-ribose 5-phosphate. Gly-166 lines the D-ribose 5-phosphate pocket. D-glyceraldehyde 3-phosphate is bound at residue Arg-178. Residues Gly-227 and 248 to 249 (GS) each bind D-ribose 5-phosphate.

The protein belongs to the PdxS/SNZ family. In terms of assembly, in the presence of PdxT, forms a dodecamer of heterodimers.

The enzyme catalyses aldehydo-D-ribose 5-phosphate + D-glyceraldehyde 3-phosphate + L-glutamine = pyridoxal 5'-phosphate + L-glutamate + phosphate + 3 H2O + H(+). It functions in the pathway cofactor biosynthesis; pyridoxal 5'-phosphate biosynthesis. Catalyzes the formation of pyridoxal 5'-phosphate from ribose 5-phosphate (RBP), glyceraldehyde 3-phosphate (G3P) and ammonia. The ammonia is provided by the PdxT subunit. Can also use ribulose 5-phosphate and dihydroxyacetone phosphate as substrates, resulting from enzyme-catalyzed isomerization of RBP and G3P, respectively. The sequence is that of Pyridoxal 5'-phosphate synthase subunit PdxS from Mycobacterium leprae (strain Br4923).